Consider the following 274-residue polypeptide: Kit ligand (274 aa).

An N-terminal signal peptide occupies residues 1–25 (MKKTQTWIITCIYLQLLLFNPLVHS). At Gln-26 the chain carries Pyrrolidone carboxylic acid. The Extracellular segment spans residues 26-215 (QGICRNRVTD…SNSIEDSSLQ (190 aa)). Intrachain disulfides connect Cys-29-Cys-114 and Cys-68-Cys-164. 4 N-linked (GlcNAc...) asparagine glycosylation sites follow: Asn-90, Asn-97, Asn-145, and Asn-196. Residues 216-238 (WAAVALPAFFSLVIGFAFGALYW) traverse the membrane as a helical segment. Topologically, residues 239-274 (KKKQPNLTRTVENRQINEEDNEISMLQEKEREFQEV) are cytoplasmic.

This sequence belongs to the SCF family. Homodimer, non-covalently linked. In terms of processing, a soluble form is produced by proteolytic processing of the extracellular domain.

The protein localises to the cytoplasm. Its subcellular location is the cytoskeleton. It localises to the cell membrane. The protein resides in the cell projection. It is found in the lamellipodium. The protein localises to the filopodium. Its subcellular location is the secreted. In terms of biological role, stimulates the proliferation of mast cells. Able to augment the proliferation of both myeloid and lymphoid hematopoietic progenitors in bone marrow culture. Also mediates cell-cell adhesion. Acts synergistically with other cytokines, probably interleukins. This chain is Kit ligand (KITLG), found in Capra hircus (Goat).